Here is a 363-residue protein sequence, read N- to C-terminus: MGKVKKEDIMDIVEKYDKSNITIATLGSHTALHILRGAKQEGFRTAVVCEKGKEVPYERFGVADEFIFVDEYKDIVNSDVQDKLRAMNAIVVPHGSFVAYAGLSNVEDKFNVPMFGNRDILRWEAERDKERKMITQSGIRMPRKFDKPEDINKEVMVKFPGARGGQGYFICSSYEEFQNKIQEMKERNWITDSDVKDAHIEEYVCGTNFCIHYFYSALKDEVEVLGMDSRYETNIDGIVRIPAQDQIEANLSPSYVVSGNHPVVIRESLLPQVFENGDRLVETAKKLVKPGMNGPFCLQCLVNDDREIVIFEMSARIDGGTNSFMNGSAYSYIQFGEVMSMGRRISREIKNAIETDKLDVILT.

2 residues coordinate 5-amino-1-(5-phospho-beta-D-ribosyl)imidazole-4-carboxamide: His-29 and Ser-96. Residues Arg-118–Glu-354 enclose the ATP-grasp domain. ATP contacts are provided by residues Pro-148–Cys-210 and Glu-232. Position 260 (Asn-260) interacts with 5-amino-1-(5-phospho-beta-D-ribosyl)imidazole-4-carboxamide. Residues Gln-299 and Glu-312 each coordinate Mg(2+).

The protein belongs to the phosphohexose mutase family. The cofactor is Mg(2+). It depends on Mn(2+) as a cofactor.

The enzyme catalyses 5-amino-1-(5-phospho-beta-D-ribosyl)imidazole-4-carboxamide + formate + ATP = 5-formamido-1-(5-phospho-D-ribosyl)imidazole-4-carboxamide + ADP + phosphate. It functions in the pathway purine metabolism; IMP biosynthesis via de novo pathway; 5-formamido-1-(5-phospho-D-ribosyl)imidazole-4-carboxamide from 5-amino-1-(5-phospho-D-ribosyl)imidazole-4-carboxamide (formate route): step 1/1. Catalyzes the ATP- and formate-dependent formylation of 5-aminoimidazole-4-carboxamide-1-beta-d-ribofuranosyl 5'-monophosphate (AICAR) to 5-formaminoimidazole-4-carboxamide-1-beta-d-ribofuranosyl 5'-monophosphate (FAICAR) in the absence of folates. The chain is 5-formaminoimidazole-4-carboxamide-1-(beta)-D-ribofuranosyl 5'-monophosphate synthetase from Methanosphaera stadtmanae (strain ATCC 43021 / DSM 3091 / JCM 11832 / MCB-3).